Here is a 703-residue protein sequence, read N- to C-terminus: Calpain-8 (703 aa).

Residues 45–344 (LFKDPEFPAC…FSRLEICNLS (300 aa)) form the Calpain catalytic domain. Catalysis depends on residues Cys-105, His-262, and Asn-286. Residues 356-379 (WNLVLFNGHWTRGSTAGGCQNYPA) form a domain III region. 3 consecutive EF-hand domains span residues 575–610 (FNIN…IQKY), 618–640 (DYNH…AGFT), and 670–703 (IRLE…CVLV). 10 residues coordinate Ca(2+): Asp-588, Asn-590, Thr-592, Thr-594, Glu-599, Asp-618, Asn-620, Ser-622, Thr-624, and Glu-629.

This sequence belongs to the peptidase C2 family. Monomer and homooligomer. Interacts with COPS1/GPS1, COPB1, EYA2, NME2, NME4 and TOMM70. Ca(2+) serves as cofactor. Post-translationally, undergoes autolytic cleavage between Ala-5 and Ala-6 which gives rise to fragments extending from Ala-6 to the C-terminus, Ala-6 to the EF-hand 2 domain and from Ala-6 to the beginning of domain III. As to expression, stomach.

Its subcellular location is the cytoplasm. It is found in the golgi apparatus. It catalyses the reaction Broad endopeptidase specificity.. In terms of biological role, calcium-regulated non-lysosomal thiol-protease. Involved in membrane trafficking in the gastric surface mucus cells (pit cells) and may involve the membrane trafficking of mucus cells via interactions with coat protein. Proteolytically cleaves the beta-subunit of coatomer complex. This Homo sapiens (Human) protein is Calpain-8 (CAPN8).